The primary structure comprises 187 residues: Nucleoside-triphosphatase THEP1 (187 aa).

Residues 9-16 and 100-107 each bind ATP; these read GRPGVGKT and LIAIDEIG.

It belongs to the THEP1 NTPase family.

It carries out the reaction a ribonucleoside 5'-triphosphate + H2O = a ribonucleoside 5'-diphosphate + phosphate + H(+). Its function is as follows. Has nucleotide phosphatase activity towards ATP, GTP, CTP, TTP and UTP. May hydrolyze nucleoside diphosphates with lower efficiency. This chain is Nucleoside-triphosphatase THEP1, found in Hyperthermus butylicus (strain DSM 5456 / JCM 9403 / PLM1-5).